The following is a 298-amino-acid chain: UPF0282 protein Kcr_0286 (298 aa).

The protein belongs to the UPF0282 family.

This chain is UPF0282 protein Kcr_0286, found in Korarchaeum cryptofilum (strain OPF8).